Consider the following 436-residue polypeptide: Prenyltransferase nscD (436 aa).

This sequence belongs to the tryptophan dimethylallyltransferase family.

Its pathway is secondary metabolite biosynthesis. Functionally, prenyltransferase; part of the gene cluster that mediates the biosynthesis of neosartoricin B, a prenylated anthracenone that probably exhibits T-cell antiproliferative activity, suggestive of a physiological role as an immunosuppressive agent. The non-reducing polyketide synthase nscA probably synthesizes and cyclizes the decaketide backbone. The hydrolase nscB then mediates the product release through hydrolysis followed by spontaneous decarboxylation. The prenyltransferase nscD catalyzes the addition of the dimethylallyl group to the aromatic C5. The FAD-dependent monooxygenase nscC is then responsible for the stereospecific hydroxylation at C2. Neosartoricin B can be converted into two additional compounds neosartoricins C and D. Neosartoricin C is a spirocyclic compound that is cyclized through the attack of C3 hydroxyl on C14, followed by dehydration. On the other hand, neosartoricin D is a further cyclized compound in which attack of C2 on C14 in neosartoricin C results in the formation of the acetal-containing dioxabicyclo-octanone ring. Both of these compounds are novel and possibly represent related metabolites of the gene cluster. This Arthroderma otae (strain ATCC MYA-4605 / CBS 113480) (Microsporum canis) protein is Prenyltransferase nscD.